The sequence spans 121 residues: MASCSTSGTCGSSCCQPSCCETSCCQPSCCQTSSCGTGCGIGGGIGYGQEGSGGSVSTRIRWCHPDCHVEGTCLPPCYLVSCTPPSCCQLHHAEASCCRPSYCGQSCCRPACCCHCCEPTC.

It belongs to the KRTAP type 1 family. Interacts with hair keratins. In terms of tissue distribution, expressed in the middle/upper portions of the hair cortex, in the region termed the keratogenous zone.

Functionally, in the hair cortex, hair keratin intermediate filaments are embedded in an interfilamentous matrix, consisting of hair keratin-associated proteins (KRTAP), which are essential for the formation of a rigid and resistant hair shaft through their extensive disulfide bond cross-linking with abundant cysteine residues of hair keratins. The matrix proteins include the high-sulfur and high-glycine-tyrosine keratins. The chain is Keratin-associated protein 1-4 (KRTAP1-4) from Homo sapiens (Human).